A 312-amino-acid chain; its full sequence is Aspartate carbamoyltransferase catalytic subunit (312 aa).

2 residues coordinate carbamoyl phosphate: Arg55 and Thr56. Lys83 is a binding site for L-aspartate. Carbamoyl phosphate-binding residues include Arg105, His138, and Gln141. 2 residues coordinate L-aspartate: Arg171 and Arg225. Carbamoyl phosphate-binding residues include Gly266 and Pro267.

The protein belongs to the aspartate/ornithine carbamoyltransferase superfamily. ATCase family. Heterododecamer (2C3:3R2) of six catalytic PyrB chains organized as two trimers (C3), and six regulatory PyrI chains organized as three dimers (R2).

It catalyses the reaction carbamoyl phosphate + L-aspartate = N-carbamoyl-L-aspartate + phosphate + H(+). It functions in the pathway pyrimidine metabolism; UMP biosynthesis via de novo pathway; (S)-dihydroorotate from bicarbonate: step 2/3. Its function is as follows. Catalyzes the condensation of carbamoyl phosphate and aspartate to form carbamoyl aspartate and inorganic phosphate, the committed step in the de novo pyrimidine nucleotide biosynthesis pathway. This Corynebacterium efficiens (strain DSM 44549 / YS-314 / AJ 12310 / JCM 11189 / NBRC 100395) protein is Aspartate carbamoyltransferase catalytic subunit.